The sequence spans 359 residues: 5-formaminoimidazole-4-carboxamide-1-(beta)-D-ribofuranosyl 5'-monophosphate synthetase (359 aa).

Residues H28 and S95 each contribute to the 5-amino-1-(5-phospho-beta-D-ribosyl)imidazole-4-carboxamide site. The region spanning 115–346 (ELMIWETDRD…MGRRIAREIK (232 aa)) is the ATP-grasp domain. ATP contacts are provided by residues 144–206 (PEEI…ANIY) and E228. A 5-amino-1-(5-phospho-beta-D-ribosyl)imidazole-4-carboxamide-binding site is contributed by N256. Positions 295 and 308 each coordinate Mg(2+).

Belongs to the phosphohexose mutase family. Mg(2+) serves as cofactor. Requires Mn(2+) as cofactor.

The enzyme catalyses 5-amino-1-(5-phospho-beta-D-ribosyl)imidazole-4-carboxamide + formate + ATP = 5-formamido-1-(5-phospho-D-ribosyl)imidazole-4-carboxamide + ADP + phosphate. The protein operates within purine metabolism; IMP biosynthesis via de novo pathway; 5-formamido-1-(5-phospho-D-ribosyl)imidazole-4-carboxamide from 5-amino-1-(5-phospho-D-ribosyl)imidazole-4-carboxamide (formate route): step 1/1. Catalyzes the ATP- and formate-dependent formylation of 5-aminoimidazole-4-carboxamide-1-beta-d-ribofuranosyl 5'-monophosphate (AICAR) to 5-formaminoimidazole-4-carboxamide-1-beta-d-ribofuranosyl 5'-monophosphate (FAICAR) in the absence of folates. The sequence is that of 5-formaminoimidazole-4-carboxamide-1-(beta)-D-ribofuranosyl 5'-monophosphate synthetase from Archaeoglobus fulgidus (strain ATCC 49558 / DSM 4304 / JCM 9628 / NBRC 100126 / VC-16).